Consider the following 505-residue polypeptide: Maturase K (505 aa).

This sequence belongs to the intron maturase 2 family. MatK subfamily.

The protein resides in the plastid. It is found in the chloroplast. Usually encoded in the trnK tRNA gene intron. Probably assists in splicing its own and other chloroplast group II introns. The protein is Maturase K of Rosa stellata (Star rose).